The primary structure comprises 666 residues: MGQTKSKIKSKYASYLSFIKILLKRGGVKVSTKNLIKLFQIIEQFCPWFPEQGTLDLKDWKRIGKELKQAGRKGNIIPLTVWNDWAIIKAALEPFQTEKDSVSVSDALGSCIIDCNENTRKKSQKETEGLHCEYVAEPVMAQSTQNVDYNQLQEVIYPETLKLEGKGPELVGPSESKPRGTSHLPAGQVPVTLQPQKQVKENKTQPPVAYQYWPPAELQYRPPPESQYGYPGMPPAPQGRAPYPQPPTRRLNPTAPPSRQGSELHEIIDKSRKEGDTEAWQFPVTLEPMPPGEGAQEGEPPTVEARYKSFSIKMLKDMKEGVKQYGPNSPYMRTLLDSIAHGHRLIPYDWEILAKSSLSPSQFLQFKTWWIDGVQEQVRRNRAANPPVNIDADQLLGIGQNWSTISQQALMQNEAIEQVRAICLRAWEKIQDPGSTCPSFNTVRQGSKEPYPDFVARLQDVAQKSIADEKARKVIVELMAYENANPECQSAIKPLKGKVPAGSDVISEYVKACDGIGGAMHKAMLMAQAITGVVLGGQVRTFGGKCYNCGQIGHLKKNCPVLNKQNITIQATTTGREPPDLCPRCKKGKHWASQCRSKFDKNGQPLSGNEQRGQPQAPQQTGAFPIQPFVPQGFQEQQPPLSQVFQGISQLPQYNNCPPPQAAVQQ.

Gly2 carries the N-myristoyl glycine lipid modification. 2 disordered regions span residues 165–205 (GKGP…NKTQ) and 217–264 (ELQY…GSEL). Residues 232–247 (GMPPAPQGRAPYPQPP) show a composition bias toward pro residues. 2 consecutive CCHC-type zinc fingers follow at residues 544-561 (GKCY…NCPV) and 580-597 (DLCP…QCRS). The interval 598–641 (KFDKNGQPLSGNEQRGQPQAPQQTGAFPIQPFVPQGFQEQQPPL) is disordered. The span at 604-622 (QPLSGNEQRGQPQAPQQTG) shows a compositional bias: polar residues.

Belongs to the beta type-B retroviral Gag protein family. HERV class-II K(HML-2) gag subfamily. Post-translationally, specific enzymatic cleavages may yield mature proteins. In terms of processing, myristoylation is essential for retroviral assembly. Alteration of the glycine residue leads to a block in the budding of particles and an accumulation of Gag inside the cell.

The protein resides in the cell membrane. In terms of biological role, the products of the Gag polyproteins of infectious retroviruses perform highly complex orchestrated tasks during the assembly, budding, maturation, and infection stages of the viral replication cycle. During viral assembly, the proteins form membrane associations and self-associations that ultimately result in budding of an immature virion from the infected cell. Gag precursors also function during viral assembly to selectively bind and package two plus strands of genomic RNA. Endogenous Gag proteins may have kept, lost or modified their original function during evolution. The sequence is that of Endogenous retrovirus group K member 7 Gag polyprotein (ERVK-7) from Homo sapiens (Human).